Here is a 263-residue protein sequence, read N- to C-terminus: Uroplakin-3b-like protein 1 (263 aa).

The first 33 residues, 1 to 33, serve as a signal peptide directing secretion; the sequence is MDNSWRLGPAIGLSAGQSQLLVSLLLLLTRVQP. Over 34 to 204 the chain is Extracellular; the sequence is GTDVAAPEHI…PGPQSPGTVV (171 aa). 3 N-linked (GlcNAc...) asparagine glycosylation sites follow: Asn51, Asn76, and Asn91. The helical transmembrane segment at 205 to 225 threads the bilayer; it reads IIAILSILLAVLLTVLLAVLI. Over 226-263 the chain is Cytoplasmic; it reads YTCFNSCRSTSLSGPEEAGSVRRYTTHLAFSTPAEGAS.

This sequence belongs to the uroplakin-3 family.

The protein localises to the membrane. The chain is Uroplakin-3b-like protein 1 from Homo sapiens (Human).